Consider the following 737-residue polypeptide: Autolysin (737 aa).

Positions 1–13 (MKKESMSRIERRK) are enriched in basic and acidic residues. Disordered stretches follow at residues 1-28 (MKKE…KKST), 51-132 (AEAT…TDSS), and 335-360 (PSSG…SGTN). A signal peptide spans 1–53 (MKKESMSRIERRKAQQRKKTPVQWKKSTTLFSSALIVSSVGTPVALLPVTAEA). A compositionally biased stretch (low complexity) spans 67 to 117 (PTTETGLVETPTTETTPGTTEQPTTDSSTTTESTTESSKETPTTPSTEQPT). Over residues 118–132 (ADSTTPVESGTTDSS) the composition is skewed to polar residues. Residues 339–352 (GNTGGGTVNPGTGG) are compositionally biased toward gly residues. The region spanning 361–404 (TYYTVKSGDTLNKIAAQYGVSVANLRSWNGISGDLIFVGQKLIV) is the LysM 1 domain. The disordered stretch occupies residues 409-429 (SGNTGGSGSGGSNNNQSGTNT). Residues 410 to 419 (GNTGGSGSGG) are compositionally biased toward gly residues. A compositionally biased stretch (low complexity) spans 420 to 429 (SNNNQSGTNT). LysM domains follow at residues 429–472 (TYYT…KLIV), 497–540 (TYYT…KIIV), 565–608 (TYYT…KIIV), 631–674 (TSYT…TIIV), and 693–736 (KRHT…TLKV).

The protein belongs to the glycosyl hydrolase 73 family.

The protein resides in the secreted. Functionally, hydrolyzes the cell wall of E.faecalis and M.lysodeikticus. May play an important role in cell wall growth and cell separation. The sequence is that of Autolysin from Enterococcus faecalis (strain ATCC 700802 / V583).